The chain runs to 441 residues: Xaa-Pro dipeptidase (441 aa).

5 residues coordinate Mn(2+): Asp-244, Asp-255, His-336, Glu-381, and Glu-420.

It belongs to the peptidase M24B family. Bacterial-type prolidase subfamily. Mn(2+) is required as a cofactor.

It carries out the reaction Xaa-L-Pro dipeptide + H2O = an L-alpha-amino acid + L-proline. Functionally, splits dipeptides with a prolyl residue in the C-terminal position. This chain is Xaa-Pro dipeptidase, found in Xanthomonas campestris pv. campestris (strain 8004).